The following is an 87-amino-acid chain: UPF0250 protein NT01EI_2946 (87 aa).

Belongs to the UPF0250 family.

The protein is UPF0250 protein NT01EI_2946 of Edwardsiella ictaluri (strain 93-146).